Consider the following 276-residue polypeptide: UPF0328 protein ECU03_0010 (276 aa).

Disordered stretches follow at residues 1 to 132 and 156 to 176; these read MAAP…PIIS and SFCQNTRDSPSLPPQRPNMVH. Residues 106 to 126 are compositionally biased toward basic and acidic residues; the sequence is HTEGCHTHEANPEPNTKHTET.

This sequence belongs to the UPF0328 family.

This Encephalitozoon cuniculi (strain GB-M1) (Microsporidian parasite) protein is UPF0328 protein ECU03_0010.